The following is a 384-amino-acid chain: Class V chitinase CHIT5a (384 aa).

An N-terminal signal peptide occupies residues 1–27 (MAVQKIIITPILVFLVTIFFNVSSSSS). N-linked (GlcNAc...) asparagine glycosylation is found at asparagine 29, asparagine 114, and asparagine 133. A GH18 domain is found at 39–384 (GVRSAYWPAG…SKQASNAWGH (346 aa)). Glutamate 152 serves as the catalytic Proton donor. 2 N-linked (GlcNAc...) asparagine glycosylation sites follow: asparagine 195 and asparagine 234.

The protein belongs to the glycosyl hydrolase 18 family. Chitinase class V subfamily.

The enzyme catalyses Random endo-hydrolysis of N-acetyl-beta-D-glucosaminide (1-&gt;4)-beta-linkages in chitin and chitodextrins.. It participates in glycan degradation; chitin degradation. Functionally, possesses chitinase activity in vitro toward glycol chitin, carboxymethyl-chitin, colloidal chitin, and the chitin oligosaccharides (N-acetylglucosamine) (GlcNAc)6 and (GlcNAc)5. Hydrolyzes (GlcNAc)6 into (GlcNAc)4 and (GlcNAc)2, or two (GlcNAc)3 molecules. Has the capacity to inhibit hyphal growth of the fungus Trichoderma viride in an agar-plate bioassay. The sequence is that of Class V chitinase CHIT5a from Medicago truncatula (Barrel medic).